We begin with the raw amino-acid sequence, 414 residues long: Protein PHLOEM PROTEIN 2-LIKE A10 (414 aa).

2 consecutive transmembrane segments (helical) span residues 20-40 (WLIF…VYHL) and 379-399 (YVGA…LHII).

The protein resides in the membrane. The sequence is that of Protein PHLOEM PROTEIN 2-LIKE A10 (PP2A10) from Arabidopsis thaliana (Mouse-ear cress).